The following is a 737-amino-acid chain: uncharacterized protein (737 aa).

Transmembrane regions (helical) follow at residues 11–31, 36–56, 60–80, 118–138, 142–162, 164–184, and 200–220; these read LSLL…LRPL, ETKH…LTFF, WFVT…ILFY, TLLF…WVIY, ILFF…FTPY, ATFA…LLYL, and VLKW…FGLA. Residues 556–611 form a disordered region; it reads PAQFTSSDTKDSGSDSSSSPKKAKEKQKEEKKQPQKEEKQKEKREPAVSKKPSASH. Positions 581 to 603 are enriched in basic and acidic residues; it reads KQKEEKKQPQKEEKQKEKREPAV. Residues 618–638 form a helical membrane-spanning segment; the sequence is LYAALAVLAVLLVAAVLLYVF.

The protein resides in the cell membrane. This is an uncharacterized protein from Bacillus subtilis (strain 168).